A 44-amino-acid polypeptide reads, in one-letter code: Photosystem I reaction center subunit IX (44 aa).

Residues 7–27 form a helical membrane-spanning segment; that stretch reads YLSVAPVLTTLWFGSLAGLLI.

This sequence belongs to the PsaJ family.

It is found in the plastid. Its subcellular location is the chloroplast thylakoid membrane. Functionally, may help in the organization of the PsaE and PsaF subunits. This is Photosystem I reaction center subunit IX from Nymphaea alba (White water-lily).